Here is a 563-residue protein sequence, read N- to C-terminus: RUN and FYVE domain-containing protein 4 (563 aa).

Positions 33-166 (TETSAELHRL…VAFNLDLQRP (134 aa)) constitute an RUN domain. 2 disordered regions span residues 176–327 (SESR…TTEG) and 375–397 (KKSSPTEKPQEWTGVTSGTMQED). Basic and acidic residues-rich tracts occupy residues 196–205 (GFPEEVRCSR) and 263–284 (ETEREGFQLDQKDGGPKPRKFL). A compositionally biased stretch (polar residues) spans 285 to 295 (ENSTASIQQQR). The segment covering 297 to 312 (RAKDVKMQLTGRKVEG) has biased composition (basic and acidic residues). Polar residues predominate over residues 385–396 (EWTGVTSGTMQE). The stretch at 421–462 (QAQCQEQLRAQEAELQALQEQLSRCQKERALLQVKLEQKQQE) forms a coiled coil. An FYVE-type zinc finger spans residues 428-558 (LRAQEAELQA…RCCPTCAQQE (131 aa)). Residues C513, C516, C529, C532, C537, C540, C551, and C554 each contribute to the Zn(2+) site.

Forms homodimers (via coiled coil domain). Forms a ternary complex with RAB7A and LAMP2; the interaction with RAB7A is mediated by RUFY4 (via RUN and coiled coil domains). Interacts with GTP-, but not GDP-bound ARL8A and ARL8B. Interacts with dynactin/DCTN1 and the dynein intermediate chain DYNC1I1/2. Expressed in dendritic cells.

It localises to the cytoplasmic vesicle. The protein resides in the autophagosome. The protein localises to the lysosome. Functionally, ARL8 effector that promotes the coupling of endolysosomes to dynein-dynactin for retrograde transport along microtubules. Acts by binding both GTP-bound ARL8 and dynein-dynactin. In nonneuronal cells, promotes concentration of endolysosomes in the juxtanuclear area. In hippocampal neurons, drives retrograde transport of endolysosomes from the axon to the soma. Positive regulator of macroautophagy in dendritic cells. Increases autophagic flux, probably by stimulating both autophagosome formation and facilitating tethering with lysosomes. Binds to phosphatidylinositol 3-phosphate (PtdIns3P) through its FYVE-type zinc finger. Positive regulator of osteosclast bone-resorbing activity, possibly by promoting late endosome-lysosome fusion by acting as an adapter protein between RAB7A on late endosomes and LAMP2 on primary lysosomes. This chain is RUN and FYVE domain-containing protein 4 (Rufy4), found in Mus musculus (Mouse).